Reading from the N-terminus, the 525-residue chain is MDVSYYDGPKDEVAEAMLKSAVTAMRLGQYEDGKGRLEEIMEFGTSNFQLLGTIYMYYGRVCRHLNHDAKALEFFEHELNMFKLIFNYPEACDSTRRIVEQALKMGKFPKARRFAEDLIDYTSNKKNGEKYIGQARILFASVCLEGCERDVESNQDEKKKLLSICAEQIAAVKLFNENNTEGAVSETKIMLLEAKCLSLDEKYEESRRKYQECIDFAIKTDQFEAVHIAYYDKALYAETDLLFFIIRDLRSALFYATKFGKERDVVKYKSKLSEEMLRNGEFHEAYLYGLEALVSIRKLGLNEYIGDVLLTIAKCLIALGKRRQAAYFIILGSVLTINQNSFKLFYEQIDVAMNQERSETATDQDVCLAIDSSPDPTSSNDMINKFVVELEHATNVETWEMIVNGIIDDQKKPVAIEKKENEEPVDMMDLIFSMSSRMDDQRTELPAARFIPPRPVSSASKKTTKSHRILPGLRANWTKVQSMKFDGHTMNRILKRSKKSKSSLDSTNSMQGDDTRSDDVTMTSK.

The GoLoco domain maps to 424-445 (PVDMMDLIFSMSSRMDDQRTEL). The segment at 488–525 (HTMNRILKRSKKSKSSLDSTNSMQGDDTRSDDVTMTSK) is disordered.

Interacts with gpr-1, lin-5 and GDP-bound goa-1.

The protein resides in the cytoplasm. The protein localises to the cell cortex. Its subcellular location is the cytoskeleton. It localises to the spindle. In the 1-cell embryo, probably together with gpr-2, controls nuclear rotation and spindle elongation during mitosis. Complex of gpr-1 and gpr-2, in association with lin-5, activates G-protein signaling to affect mitotic spindle force. Polarity determinants (par genes) may regulate lin-5/gpr-1/gpr-2/goa-1 locally to create the asymmetric forces that drive spindle movement. The chain is G-protein regulator 1 (gpr-1) from Caenorhabditis elegans.